A 183-amino-acid chain; its full sequence is Lipid droplet coating protein mpl1 (183 aa).

Belongs to the perilipin family.

Its subcellular location is the lipid droplet. In terms of biological role, lipid droplet coating protein that regulates lipid metabolism, appressorial turgor pressure, and virulence. Appressorial turgor pressure is important for breaching the insect cuticle during infection. The chain is Lipid droplet coating protein mpl1 from Metarhizium robertsii (strain ARSEF 23 / ATCC MYA-3075) (Metarhizium anisopliae (strain ARSEF 23)).